Reading from the N-terminus, the 332-residue chain is Nuclear hormone receptor family member nhr-9 (332 aa).

The segment at residues 11-85 (ERRCAICSKL…MGMRIVTNQY (75 aa)) is a DNA-binding region (nuclear receptor). 2 consecutive NR C4-type zinc fingers follow at residues 14-34 (CAIC…CNAC) and 50-73 (CINN…YNKC). The NR LBD domain occupies 101-332 (DRSNKLMNFQ…KRLCAELLGA (232 aa)).

This sequence belongs to the nuclear hormone receptor family.

It localises to the nucleus. In terms of biological role, orphan nuclear receptor. The chain is Nuclear hormone receptor family member nhr-9 (nhr-9) from Caenorhabditis elegans.